We begin with the raw amino-acid sequence, 315 residues long: Peroxidase 1 (315 aa).

The N-terminal stretch at 1–21 (MASSSYTSLLVLVALVTAASA) is a signal peptide. Gln-22 carries the pyrrolidone carboxylic acid modification. Disulfide bonds link Cys-32/Cys-107, Cys-65/Cys-70, Cys-113/Cys-310, and Cys-193/Cys-219. His-63 acts as the Proton acceptor in catalysis. Ca(2+) contacts are provided by Asp-64, Val-67, Gly-69, Asp-71, and Ser-73. Pro-155 contributes to the substrate binding site. N-linked (GlcNAc...) asparagine glycosylation occurs at Asn-158. His-186 is a heme b binding site. Ca(2+) is bound at residue Thr-187. Ca(2+)-binding residues include Asp-234, Thr-237, and Asp-242. Residue Asn-265 is glycosylated (N-linked (GlcNAc...) asparagine).

Belongs to the peroxidase family. Classical plant (class III) peroxidase subfamily. Ca(2+) is required as a cofactor. Requires heme b as cofactor.

Its subcellular location is the secreted. It catalyses the reaction 2 a phenolic donor + H2O2 = 2 a phenolic radical donor + 2 H2O. In terms of biological role, removal of H(2)O(2), oxidation of toxic reductants, biosynthesis and degradation of lignin, suberization, auxin catabolism, response to environmental stresses such as wounding, pathogen attack and oxidative stress. These functions might be dependent on each isozyme/isoform in each plant tissue. Functionally, involved in defense response to powdery meldew fungus. This chain is Peroxidase 1, found in Hordeum vulgare (Barley).